Consider the following 256-residue polypeptide: Major prion protein (256 aa).

The first 24 residues, 1–24 (MVKSHIGSWILVLFVAMWSDVGLC), serve as a signal peptide directing secretion. The tract at residues 25 to 233 (KKRPKPGGGW…ESQAYYQRGA (209 aa)) is interaction with GRB2, ERI3 and SYN1. The tract at residues 28–110 (PKPGGGWNTG…QWNKPSKPKT (83 aa)) is disordered. 5 repeat units span residues 54-62 (PQGGGGWGQ), 63-70 (PHGGGWGQ), 71-78 (PHGGGWGQ), 79-86 (PHGGGWGQ), and 87-95 (PHGGGGWGQ). The segment at 54-95 (PQGGGGWGQPHGGGWGQPHGGGWGQPHGGGWGQPHGGGGWGQ) is 5 X 8 AA tandem repeats of P-H-G-G-G-W-G-Q. The segment covering 55 to 97 (QGGGGWGQPHGGGWGQPHGGGWGQPHGGGWGQPHGGGGWGQGG) has biased composition (gly residues). 12 residues coordinate Cu(2+): His-64, Gly-65, Gly-66, His-72, Gly-73, Gly-74, His-80, Gly-81, Gly-82, His-88, Gly-90, and Gly-91. An intrachain disulfide couples Cys-182 to Cys-217. N-linked (GlcNAc...) asparagine glycosylation is found at Asn-184 and Asn-200. Residue Ala-233 is the site of GPI-anchor amidated alanine attachment. Residues 234-256 (SVILFSPPPVILLISFLIFLIVG) constitute a propeptide, removed in mature form.

Belongs to the prion family. As to quaternary structure, monomer and homodimer. Has a tendency to aggregate into amyloid fibrils containing a cross-beta spine, formed by a steric zipper of superposed beta-strands. Soluble oligomers may represent an intermediate stage on the path to fibril formation. Copper binding may promote oligomerization. Interacts with GRB2, APP, ERI3/PRNPIP and SYN1. Mislocalized cytosolically exposed PrP interacts with MGRN1; this interaction alters MGRN1 subcellular location and causes lysosomal enlargement. Interacts with KIAA1191.

The protein localises to the cell membrane. It localises to the golgi apparatus. Its primary physiological function is unclear. Has cytoprotective activity against internal or environmental stresses. May play a role in neuronal development and synaptic plasticity. May be required for neuronal myelin sheath maintenance. May play a role in iron uptake and iron homeostasis. Soluble oligomers are toxic to cultured neuroblastoma cells and induce apoptosis (in vitro). Association with GPC1 (via its heparan sulfate chains) targets PRNP to lipid rafts. Also provides Cu(2+) or Zn(2+) for the ascorbate-mediated GPC1 deaminase degradation of its heparan sulfate side chains. The chain is Major prion protein (PRNP) from Capra hircus (Goat).